Consider the following 215-residue polypeptide: Cytochrome b6 (215 aa).

The helical transmembrane segment at 32 to 52 threads the bilayer; it reads LFYCLGGITLTCFLIQVATGF. Cys-35 serves as a coordination point for heme c. Heme b is bound by residues His-86 and His-100. Helical transmembrane passes span 90-110, 116-136, and 186-206; these read ASMM…TGGF, STWV…VTGY, and LHTF…FLMI. Heme b contacts are provided by His-187 and His-202.

Belongs to the cytochrome b family. PetB subfamily. As to quaternary structure, the 4 large subunits of the cytochrome b6-f complex are cytochrome b6, subunit IV (17 kDa polypeptide, PetD), cytochrome f and the Rieske protein, while the 4 small subunits are PetG, PetL, PetM and PetN. The complex functions as a dimer. Requires heme b as cofactor. Heme c serves as cofactor.

It localises to the plastid. The protein resides in the chloroplast thylakoid membrane. In terms of biological role, component of the cytochrome b6-f complex, which mediates electron transfer between photosystem II (PSII) and photosystem I (PSI), cyclic electron flow around PSI, and state transitions. This Bigelowiella natans (Pedinomonas minutissima) protein is Cytochrome b6.